The sequence spans 286 residues: Dioxygenase trt7 (286 aa).

Residues H129, D131, and H206 each contribute to the Fe cation site.

It belongs to the PhyH family. Homodimer. Requires Fe cation as cofactor.

It participates in secondary metabolite biosynthesis; terpenoid biosynthesis. Its function is as follows. Dioxygenase; part of the gene cluster that mediates the biosynthesis of terretonin, a fungal meroterpenoid that acts as a mycotoxin. The first step of the pathway is the synthesis of 3,5-dimethylorsellinic acid (DMOA) by the polyketide synthase trt4. DMOA is then prenylated into farnesyl-DMOA by the polyprenyl transferase trt2. Methylation by the methyltransferase trt5 then leads to farnesyl-DMOA methyl ester which is further subject to epoxidation by the FAD-dependent monooxygenase trt8 to yield epoxyfarnesyl-DMOA methyl ester. Cyclization of epoxyfarnesyl-DMOA methyl ester by the terpene cyclase trt1 leads to a tetracycle intermediate which is in turn converted to preterretonin. Dehydrogenase trt9 comes next to transform preterretonin to preterrenoid. The FAD-dependent monooxygenase trt3 is then required for the C-hydroxylation at C16 of preterrenoid to yield terrenoid. The cytochrome P450 trt6 catalyzes three successive oxidations to transform terrenoid into an unstable intermediate, which then undergoes the D-ring expansion and unusual rearrangement of the methoxy group to afford the core skeleton of terretonin. Trt14 catalyzes the D-ring expansion of terretonin involving intramolecular methoxy rearrangement as well as the hydrolysis of the expanded D-ring and the methyl ester moiety. Finally, the nonheme iron-dependent dioxygenase trt7 accomplishes the last two oxidation reactions steps to complete the biosynthesis of terretonin. Terretonin C is produced via spontaneous decarboxylation of the terretonin precursor. Another shunt product of the terretonin biosynthesis is dihydrofarnesyl-DMOA, derived from epoxyfarnesyl-DMOA through hydrolysis of the epoxide. The protein is Dioxygenase trt7 of Aspergillus terreus (strain NIH 2624 / FGSC A1156).